The following is a 2715-amino-acid chain: Cilia- and flagella-associated protein 46 (2715 aa).

10 TPR repeats span residues 89–122 (CRAQ…AKGE), 175–208 (AELM…IKSH), 261–295 (GDIS…LLFE), 324–359 (PGKL…AQLD), 426–459 (CQVH…DSLG), 469–503 (STRL…TPKD), 807–845 (SRKF…TNGS), 936–969 (LQTL…GIKY), 1111–1144 (AALY…LPRT), and 1174–1211 (AESE…LQKP). Residues 1356 to 1412 (SHLLLPKKEKENERSKEKEKERSKEKENERSKEKDKEKGKEEKVKEPKQSQSPAPIK) are disordered. The segment covering 1361-1403 (PKKEKENERSKEKEKERSKEKENERSKEKDKEKGKEEKVKEPK) has biased composition (basic and acidic residues). Residues 1362 to 1401 (KKEKENERSKEKEKERSKEKENERSKEKDKEKGKEEKVKE) adopt a coiled-coil conformation. Residues 1639-1672 (AQCLLLLAQLANKEKNYGQAKKMIAQAQHLGGSE) form a TPR 11 repeat. Residues 1781–1810 (VDVKLERAKIKRLRAQNEKDEEQKTAYYLE) are a coiled coil. 3 disordered regions span residues 2000-2023 (EEEG…EHCR), 2294-2319 (AVVA…HSTV), and 2371-2399 (ETEG…KGSI). 2 stretches are compositionally biased toward basic and acidic residues: residues 2300–2311 (GKSKGKDKERKT) and 2371–2383 (ETEG…GRSR). Positions 2384 to 2398 (DPKKRSLAKKGRKGS) are enriched in basic residues. TPR repeat units lie at residues 2399–2432 (IPRT…EMLT) and 2504–2537 (VAVL…EANW). Residues 2541 to 2567 (ASPSEDEWRRGGEPRRGFSDLEGQAAA) form a disordered region. Over residues 2546 to 2559 (DEWRRGGEPRRGFS) the composition is skewed to basic and acidic residues.

The protein belongs to the CFAP46 family.

It is found in the cytoplasm. Its subcellular location is the cytoskeleton. It localises to the cilium axoneme. As part of the central apparatus of the cilium axoneme plays a role in cilium movement. This is Cilia- and flagella-associated protein 46 from Homo sapiens (Human).